A 423-amino-acid polypeptide reads, in one-letter code: Putative competence-damage inducible protein (423 aa).

The protein belongs to the CinA family.

The sequence is that of Putative competence-damage inducible protein from Streptococcus equi subsp. zooepidemicus (strain MGCS10565).